We begin with the raw amino-acid sequence, 150 residues long: D-aminoacyl-tRNA deacylase (150 aa).

A Gly-cisPro motif, important for rejection of L-amino acids motif is present at residues 138–139 (GP).

Belongs to the DTD family. Homodimer.

The protein localises to the cytoplasm. The enzyme catalyses glycyl-tRNA(Ala) + H2O = tRNA(Ala) + glycine + H(+). It carries out the reaction a D-aminoacyl-tRNA + H2O = a tRNA + a D-alpha-amino acid + H(+). In terms of biological role, an aminoacyl-tRNA editing enzyme that deacylates mischarged D-aminoacyl-tRNAs. Also deacylates mischarged glycyl-tRNA(Ala), protecting cells against glycine mischarging by AlaRS. Acts via tRNA-based rather than protein-based catalysis; rejects L-amino acids rather than detecting D-amino acids in the active site. By recycling D-aminoacyl-tRNA to D-amino acids and free tRNA molecules, this enzyme counteracts the toxicity associated with the formation of D-aminoacyl-tRNA entities in vivo and helps enforce protein L-homochirality. This is D-aminoacyl-tRNA deacylase from Sorangium cellulosum (strain So ce56) (Polyangium cellulosum (strain So ce56)).